Here is a 419-residue protein sequence, read N- to C-terminus: Serine hydroxymethyltransferase (419 aa).

(6S)-5,6,7,8-tetrahydrofolate contacts are provided by residues leucine 121 and 125 to 127; that span reads GHL. The residue at position 231 (lysine 231) is an N6-(pyridoxal phosphate)lysine.

The protein belongs to the SHMT family. In terms of assembly, homodimer. Requires pyridoxal 5'-phosphate as cofactor.

Its subcellular location is the cytoplasm. The catalysed reaction is (6R)-5,10-methylene-5,6,7,8-tetrahydrofolate + glycine + H2O = (6S)-5,6,7,8-tetrahydrofolate + L-serine. Its pathway is one-carbon metabolism; tetrahydrofolate interconversion. It functions in the pathway amino-acid biosynthesis; glycine biosynthesis; glycine from L-serine: step 1/1. In terms of biological role, catalyzes the reversible interconversion of serine and glycine with tetrahydrofolate (THF) serving as the one-carbon carrier. This reaction serves as the major source of one-carbon groups required for the biosynthesis of purines, thymidylate, methionine, and other important biomolecules. Also exhibits THF-independent aldolase activity toward beta-hydroxyamino acids, producing glycine and aldehydes, via a retro-aldol mechanism. This Phytoplasma mali (strain AT) protein is Serine hydroxymethyltransferase.